Consider the following 919-residue polypeptide: DNA double-strand break repair Rad50 ATPase (919 aa).

ATP-binding positions include 33-39 (NGAGKST) and glutamine 143. 3 coiled-coil regions span residues 208 to 268 (MTLR…MLVN), 315 to 379 (HEVA…RRYT), and 414 to 458 (ESVL…LEES). In terms of domain architecture, Zinc-hook spans 417–516 (LERLDAVIND…EASRLQDKRR (100 aa)). 2 residues coordinate Zn(2+): cysteine 464 and cysteine 467. Coiled-coil stretches lie at residues 486 to 515 (EAER…QDKR), 541 to 595 (EDLA…LQRL), and 635 to 749 (AYRS…RKAS).

It belongs to the SMC family. RAD50 subfamily. In terms of assembly, homodimer. Forms a heterotetramer composed of two Mre11 subunits and two Rad50 subunits. Requires Zn(2+) as cofactor.

In terms of biological role, part of the Rad50/Mre11 complex, which is involved in the early steps of DNA double-strand break (DSB) repair. The complex may facilitate opening of the processed DNA ends to aid in the recruitment of HerA and NurA. Rad50 controls the balance between DNA end bridging and DNA resection via ATP-dependent structural rearrangements of the Rad50/Mre11 complex. The sequence is that of DNA double-strand break repair Rad50 ATPase from Aeropyrum pernix (strain ATCC 700893 / DSM 11879 / JCM 9820 / NBRC 100138 / K1).